The sequence spans 882 residues: DNA mismatch repair protein MutS (882 aa).

627 to 634 (GPNMAGKS) provides a ligand contact to ATP.

It belongs to the DNA mismatch repair MutS family.

This protein is involved in the repair of mismatches in DNA. It is possible that it carries out the mismatch recognition step. This protein has a weak ATPase activity. The protein is DNA mismatch repair protein MutS of Anaeromyxobacter sp. (strain K).